A 181-amino-acid polypeptide reads, in one-letter code: Cytochrome c-type biogenesis protein CcmE (181 aa).

Over Met1–Arg8 the chain is Cytoplasmic. Residues Leu9–Ala29 form a helical; Signal-anchor for type II membrane protein membrane-spanning segment. Topologically, residues Leu30 to Asn181 are periplasmic. Heme-binding residues include His131 and Tyr135. 2 stretches are compositionally biased toward basic and acidic residues: residues Tyr135–His148 and Ala156–Lys166. The tract at residues Tyr135–Lys166 is disordered.

It belongs to the CcmE/CycJ family.

It is found in the cell inner membrane. Heme chaperone required for the biogenesis of c-type cytochromes. Transiently binds heme delivered by CcmC and transfers the heme to apo-cytochromes in a process facilitated by CcmF and CcmH. The polypeptide is Cytochrome c-type biogenesis protein CcmE (Actinobacillus pleuropneumoniae serotype 7 (strain AP76)).